A 1433-amino-acid chain; its full sequence is DNA polymerase III PolC-type (1433 aa).

One can recognise an Exonuclease domain in the interval 419–575 (FVVFDVETTG…YDAEATGHLL (157 aa)).

The protein belongs to the DNA polymerase type-C family. PolC subfamily.

It is found in the cytoplasm. The enzyme catalyses DNA(n) + a 2'-deoxyribonucleoside 5'-triphosphate = DNA(n+1) + diphosphate. Functionally, required for replicative DNA synthesis. This DNA polymerase also exhibits 3' to 5' exonuclease activity. The protein is DNA polymerase III PolC-type of Halalkalibacterium halodurans (strain ATCC BAA-125 / DSM 18197 / FERM 7344 / JCM 9153 / C-125) (Bacillus halodurans).